A 239-amino-acid polypeptide reads, in one-letter code: 1-(5-phosphoribosyl)-5-[(5-phosphoribosylamino)methylideneamino] imidazole-4-carboxamide isomerase (239 aa).

The Proton acceptor role is filled by D8. The active-site Proton donor is D129.

The protein belongs to the HisA/HisF family.

The protein resides in the cytoplasm. The enzyme catalyses 1-(5-phospho-beta-D-ribosyl)-5-[(5-phospho-beta-D-ribosylamino)methylideneamino]imidazole-4-carboxamide = 5-[(5-phospho-1-deoxy-D-ribulos-1-ylimino)methylamino]-1-(5-phospho-beta-D-ribosyl)imidazole-4-carboxamide. It participates in amino-acid biosynthesis; L-histidine biosynthesis; L-histidine from 5-phospho-alpha-D-ribose 1-diphosphate: step 4/9. The polypeptide is 1-(5-phosphoribosyl)-5-[(5-phosphoribosylamino)methylideneamino] imidazole-4-carboxamide isomerase (Bacillus cereus (strain B4264)).